A 72-amino-acid polypeptide reads, in one-letter code: Cell division protein ZapB (72 aa).

A coiled-coil region spans residues 1 to 72 (MSLEILDQLE…RSLLGKIDNV (72 aa)). A disordered region spans residues 33-57 (KNNQSQQANDALRSENEQLKSEHQN). Positions 44–57 (LRSENEQLKSEHQN) are enriched in basic and acidic residues.

Belongs to the ZapB family. As to quaternary structure, homodimer. The ends of the coiled-coil dimer bind to each other, forming polymers. Interacts with FtsZ.

The protein resides in the cytoplasm. Functionally, non-essential, abundant cell division factor that is required for proper Z-ring formation. It is recruited early to the divisome by direct interaction with FtsZ, stimulating Z-ring assembly and thereby promoting cell division earlier in the cell cycle. Its recruitment to the Z-ring requires functional FtsA or ZipA. The protein is Cell division protein ZapB of Pasteurella multocida (strain Pm70).